The following is a 306-amino-acid chain: 17-beta-hydroxysteroid dehydrogenase type 3 (306 aa).

Residue Gly-44–Leu-73 participates in NADP(+) binding. Ser-181 contacts substrate. Residue Tyr-194 is the Proton acceptor of the active site.

It belongs to the short-chain dehydrogenases/reductases (SDR) family. 17-beta-HSD 3 subfamily.

The protein localises to the endoplasmic reticulum. It catalyses the reaction a 17beta-hydroxy steroid + NADP(+) = a 17-oxo steroid + NADPH + H(+). It carries out the reaction testosterone + NADP(+) = androst-4-ene-3,17-dione + NADPH + H(+). The enzyme catalyses 17beta-estradiol + NADP(+) = estrone + NADPH + H(+). The catalysed reaction is 3beta-hydroxyandrost-5-en-17-one + NADPH + H(+) = androst-5-en-3beta,17beta-diol + NADP(+). It catalyses the reaction 17beta-hydroxy-5alpha-androstan-3-one + NADP(+) = 5alpha-androstan-3,17-dione + NADPH + H(+). It carries out the reaction androsterone + NADPH + H(+) = 5alpha-androstane-3alpha,17beta-diol + NADP(+). The enzyme catalyses 3beta-hydroxy-5alpha-androstan-17-one + NADPH + H(+) = 5alpha-androstane-3beta,17beta-diol + NADP(+). The catalysed reaction is androst-4-ene-3,11,17-trione + NADPH + H(+) = 17beta-hydroxyandrost-4-ene-3,11-dione + NADP(+). It catalyses the reaction 11beta-hydroxyandrost-4-ene-3,17-dione + NADPH + H(+) = 11beta,17beta-dihydroxyandrost-4-ene-3-one + NADP(+). Its pathway is hormone biosynthesis; testosterone biosynthesis. The protein operates within steroid metabolism. In terms of biological role, catalyzes the conversion of 17-oxosteroids to 17beta-hydroxysteroids. Favors the reduction of androstenedione to testosterone. Testosterone is the key androgen driving male development and function. Uses NADPH while the two other EDH17B enzymes use NADH. Androgens such as epiandrosterone, dehydroepiandrosterone, androsterone and androstanedione are accepted as substrates and reduced at C-17. Can reduce 11-ketoandrostenedione as well as 11beta-hydroxyandrostenedione at C-17 to the respective testosterone forms. Plays a role in the rate-limiting-step for the maximum level of testosterone production by the testis but does not affect basal testosterone production. This Rattus norvegicus (Rat) protein is 17-beta-hydroxysteroid dehydrogenase type 3.